Reading from the N-terminus, the 310-residue chain is Homoserine O-acetyltransferase (310 aa).

The active-site Acyl-thioester intermediate is the cysteine 142. Substrate is bound by residues lysine 163 and serine 192. Histidine 235 functions as the Proton acceptor in the catalytic mechanism. The active site involves glutamate 237. Position 249 (arginine 249) interacts with substrate.

Belongs to the MetA family.

Its subcellular location is the cytoplasm. It carries out the reaction L-homoserine + acetyl-CoA = O-acetyl-L-homoserine + CoA. The protein operates within amino-acid biosynthesis; L-methionine biosynthesis via de novo pathway; O-acetyl-L-homoserine from L-homoserine: step 1/1. Functionally, transfers an acetyl group from acetyl-CoA to L-homoserine, forming acetyl-L-homoserine. The sequence is that of Homoserine O-acetyltransferase from Parabacteroides distasonis (strain ATCC 8503 / DSM 20701 / CIP 104284 / JCM 5825 / NCTC 11152).